The following is a 68-amino-acid chain: Large ribosomal subunit protein uL29 (68 aa).

The protein belongs to the universal ribosomal protein uL29 family.

This is Large ribosomal subunit protein uL29 from Chloroflexus aggregans (strain MD-66 / DSM 9485).